The following is a 149-amino-acid chain: Protein SprT-like (149 aa).

A SprT-like domain is found at 4-143 (TDYVKQVSLE…CGLCRGKLLL (140 aa)). A Zn(2+)-binding site is contributed by histidine 64. Glutamate 65 is an active-site residue. Histidine 68 contributes to the Zn(2+) binding site.

It belongs to the SprT family. Zn(2+) serves as cofactor.

It is found in the cytoplasm. This Streptococcus pneumoniae (strain JJA) protein is Protein SprT-like.